A 425-amino-acid polypeptide reads, in one-letter code: tRNA(Ile)-lysidine synthase (425 aa).

27–32 lines the ATP pocket; sequence SGGLDS.

The protein belongs to the tRNA(Ile)-lysidine synthase family.

The protein localises to the cytoplasm. The catalysed reaction is cytidine(34) in tRNA(Ile2) + L-lysine + ATP = lysidine(34) in tRNA(Ile2) + AMP + diphosphate + H(+). In terms of biological role, ligates lysine onto the cytidine present at position 34 of the AUA codon-specific tRNA(Ile) that contains the anticodon CAU, in an ATP-dependent manner. Cytidine is converted to lysidine, thus changing the amino acid specificity of the tRNA from methionine to isoleucine. This chain is tRNA(Ile)-lysidine synthase, found in Streptococcus pneumoniae serotype 19F (strain G54).